The primary structure comprises 308 residues: Probable dimethyladenosine transferase (308 aa).

Residues 1-11 (MGKTSKVKKTK) show a composition bias toward basic residues. Residues 1-24 (MGKTSKVKKTKAGSSTGNVQSLPF) form a disordered region. Positions 12-24 (AGSSTGNVQSLPF) are enriched in polar residues. 6 residues coordinate S-adenosyl-L-methionine: His-31, Leu-33, Gly-58, Glu-79, Asp-107, and Asn-122.

The protein belongs to the class I-like SAM-binding methyltransferase superfamily. rRNA adenine N(6)-methyltransferase family. In terms of assembly, part of the small subunit (SSU) processome, composed of more than 70 proteins and the RNA chaperone small nucleolar RNA (snoRNA) U3.

Its subcellular location is the nucleus. It localises to the nucleolus. It catalyses the reaction adenosine(1779)/adenosine(1780) in 18S rRNA + 4 S-adenosyl-L-methionine = N(6)-dimethyladenosine(1779)/N(6)-dimethyladenosine(1780) in 18S rRNA + 4 S-adenosyl-L-homocysteine + 4 H(+). Functionally, specifically dimethylates two adjacent adenosines in the loop of a conserved hairpin near the 3'-end of 18S rRNA in the 40S particle. Involved in the pre-rRNA processing steps leading to small-subunit rRNA production independently of its RNA-modifying catalytic activity. Part of the small subunit (SSU) processome, first precursor of the small eukaryotic ribosomal subunit. During the assembly of the SSU processome in the nucleolus, many ribosome biogenesis factors, an RNA chaperone and ribosomal proteins associate with the nascent pre-rRNA and work in concert to generate RNA folding, modifications, rearrangements and cleavage as well as targeted degradation of pre-ribosomal RNA by the RNA exosome. The sequence is that of Probable dimethyladenosine transferase from Caenorhabditis elegans.